Reading from the N-terminus, the 540-residue chain is Chaperonin GroEL (540 aa).

ATP contacts are provided by residues 30-33 (TLGP), 87-91 (DGTTT), Gly415, and Asp496.

This sequence belongs to the chaperonin (HSP60) family. As to quaternary structure, forms a cylinder of 14 subunits composed of two heptameric rings stacked back-to-back. Interacts with the co-chaperonin GroES.

It localises to the cytoplasm. The enzyme catalyses ATP + H2O + a folded polypeptide = ADP + phosphate + an unfolded polypeptide.. In terms of biological role, together with its co-chaperonin GroES, plays an essential role in assisting protein folding. The GroEL-GroES system forms a nano-cage that allows encapsulation of the non-native substrate proteins and provides a physical environment optimized to promote and accelerate protein folding. The protein is Chaperonin GroEL of Symbiobacterium thermophilum (strain DSM 24528 / JCM 14929 / IAM 14863 / T).